A 297-amino-acid chain; its full sequence is Calponin-1 (297 aa).

One can recognise a Calponin-homology (CH) domain in the interval 28 to 131 (HQREQELREW…STLLALASMA (104 aa)). Calponin-like repeat units follow at residues 164 to 189 (IGLQ…RHLY), 204 to 229 (ISLQ…RQIF), and 243 to 268 (VSLQ…RQVY). Thr170 carries the post-translational modification Phosphothreonine; by ROCK2. Ser175 carries the phosphoserine; by ROCK2 modification. A phosphothreonine; by ROCK2 mark is found at Thr180 and Thr184. Thr259 carries the phosphothreonine; by ROCK2 modification.

This sequence belongs to the calponin family.

Thin filament-associated protein that is implicated in the regulation and modulation of smooth muscle contraction. It is capable of binding to actin, calmodulin and tropomyosin. The interaction of calponin with actin inhibits the actomyosin Mg-ATPase activity. The protein is Calponin-1 (CNN1) of Bos taurus (Bovine).